A 246-amino-acid chain; its full sequence is Trypsin V-B (246 aa).

The N-terminal stretch at M1–A15 is a signal peptide. A propeptide spans F16–R24 (activation peptide). Positions I25–A244 constitute a Peptidase S1 domain. Disulfide bonds link C31-C160, C49-C65, C133-C233, C140-C206, C171-C185, and C196-C220. H64 functions as the Charge relay system in the catalytic mechanism. Positions 76, 78, and 86 each coordinate Ca(2+). The active-site Charge relay system is the D108. The active-site Charge relay system is S200.

Belongs to the peptidase S1 family. Ca(2+) serves as cofactor.

Its subcellular location is the secreted. The protein localises to the extracellular space. The catalysed reaction is Preferential cleavage: Arg-|-Xaa, Lys-|-Xaa.. This Rattus norvegicus (Rat) protein is Trypsin V-B.